The primary structure comprises 223 residues: AN1-type zinc finger protein 6 (223 aa).

The A20-type zinc-finger motif lies at 8 to 42; that stretch reads SQAPMLCSTGCGFYGNPRTNGMCSVCYKEHLQRQN. Zn(2+) is bound by residues C14, C18, C30, and C33. The interval 41 to 155 is disordered; sequence QNSSNGRISP…PSEEQSKSLE (115 aa). S49 carries the phosphoserine modification. Polar residues-rich tracts occupy residues 77-110 and 137-148; these read ALDS…STSV and SSVSDTTQQPSE. The AN1-type zinc-finger motif lies at 158–204; that stretch reads KQKKNRCFMCRKKVGLTGFECRCGNVYCGVHRYSDVHNCSYNYKADA. C164, C167, C178, C180, C185, H188, H194, and C196 together coordinate Zn(2+). K219 bears the N6-acetyllysine mark.

As to quaternary structure, interacts with PKN1. Interacts with TRAF2. Interacts with mono- and polyubiquitin. Interacts with PEX6. Interacts with PEX5 (Cys-linked ubiquitinated).

Its subcellular location is the cytoplasm. Involved in regulation of TNF-alpha induced NF-kappa-B activation and apoptosis. Involved in modulation of 'Lys-48'-linked polyubiquitination status of TRAF2 and decreases association of TRAF2 with RIPK1. Required for PTS1 target sequence-dependent protein import into peroxisomes and PEX5 stability; may cooperate with PEX6. In vitro involved in PEX5 export from the cytosol to peroxisomes. In Mus musculus (Mouse), this protein is AN1-type zinc finger protein 6 (Zfand6).